Reading from the N-terminus, the 423-residue chain is Glutamyl-tRNA reductase (423 aa).

Substrate contacts are provided by residues 49–52 (TCNR), Ser-109, 114–116 (EGQ), and Gln-120. Catalysis depends on Cys-50, which acts as the Nucleophile. Residue 189–194 (GAGETG) participates in NADP(+) binding.

It belongs to the glutamyl-tRNA reductase family. Homodimer.

The enzyme catalyses (S)-4-amino-5-oxopentanoate + tRNA(Glu) + NADP(+) = L-glutamyl-tRNA(Glu) + NADPH + H(+). It functions in the pathway porphyrin-containing compound metabolism; protoporphyrin-IX biosynthesis; 5-aminolevulinate from L-glutamyl-tRNA(Glu): step 1/2. The protein operates within porphyrin-containing compound metabolism; chlorophyll biosynthesis. Catalyzes the NADPH-dependent reduction of glutamyl-tRNA(Glu) to glutamate 1-semialdehyde (GSA). This is Glutamyl-tRNA reductase from Chlorobium limicola (strain DSM 245 / NBRC 103803 / 6330).